A 350-amino-acid polypeptide reads, in one-letter code: Dihydroorotase (350 aa).

2 residues coordinate Zn(2+): H17 and H19. Substrate is bound by residues 19-21 (HLR) and N45. K103, H140, and H178 together coordinate Zn(2+). K103 is subject to N6-carboxylysine. Substrate is bound at residue H140. L224 provides a ligand contact to substrate. D252 lines the Zn(2+) pocket. The active site involves D252. The substrate site is built by H256 and A268.

This sequence belongs to the metallo-dependent hydrolases superfamily. DHOase family. Class II DHOase subfamily. As to quaternary structure, homodimer. Requires Zn(2+) as cofactor.

It catalyses the reaction (S)-dihydroorotate + H2O = N-carbamoyl-L-aspartate + H(+). It functions in the pathway pyrimidine metabolism; UMP biosynthesis via de novo pathway; (S)-dihydroorotate from bicarbonate: step 3/3. Catalyzes the reversible cyclization of carbamoyl aspartate to dihydroorotate. The polypeptide is Dihydroorotase (Buchnera aphidicola subsp. Acyrthosiphon pisum (strain 5A)).